The sequence spans 210 residues: Small ribosomal subunit protein uS3 (210 aa).

The KH type-2 domain occupies 38–106 (IRAFLKKRLY…EIFINIIEVR (69 aa)).

This sequence belongs to the universal ribosomal protein uS3 family. Part of the 30S ribosomal subunit. Forms a tight complex with proteins S10 and S14.

In terms of biological role, binds the lower part of the 30S subunit head. Binds mRNA in the 70S ribosome, positioning it for translation. This chain is Small ribosomal subunit protein uS3, found in Pelobacter propionicus (strain DSM 2379 / NBRC 103807 / OttBd1).